We begin with the raw amino-acid sequence, 189 residues long: Ribose 1,5-bisphosphate phosphokinase PhnN (189 aa).

An ATP-binding site is contributed by 10–17; it reads GPSGSGKD.

This sequence belongs to the ribose 1,5-bisphosphokinase family.

The enzyme catalyses alpha-D-ribose 1,5-bisphosphate + ATP = 5-phospho-alpha-D-ribose 1-diphosphate + ADP. It participates in metabolic intermediate biosynthesis; 5-phospho-alpha-D-ribose 1-diphosphate biosynthesis; 5-phospho-alpha-D-ribose 1-diphosphate from D-ribose 5-phosphate (route II): step 3/3. Its function is as follows. Catalyzes the phosphorylation of ribose 1,5-bisphosphate to 5-phospho-D-ribosyl alpha-1-diphosphate (PRPP). This chain is Ribose 1,5-bisphosphate phosphokinase PhnN, found in Enterobacter lignolyticus (strain SCF1).